Reading from the N-terminus, the 371-residue chain is Peptidyl-prolyl cis-trans isomerase D (371 aa).

A PPIase cyclophilin-type domain is found at 11–172; the sequence is FFDIQIGNEK…KDVTIVECGE (162 aa). Residues 175–195 are disordered; that stretch reads GQDYDDADKQTPDATGDPYED. 3 TPR repeats span residues 214 to 247, 267 to 300, and 308 to 341; these read ASEL…LHEF, FALH…ANAA, and AKAY…APGD.

The protein belongs to the cyclophilin-type PPIase family. PPIase D subfamily.

The protein resides in the cytoplasm. It catalyses the reaction [protein]-peptidylproline (omega=180) = [protein]-peptidylproline (omega=0). Functionally, PPIases accelerate the folding of proteins. It catalyzes the cis-trans isomerization of proline imidic peptide bonds in oligopeptides. The protein is Peptidyl-prolyl cis-trans isomerase D (cpr6) of Aspergillus oryzae (strain ATCC 42149 / RIB 40) (Yellow koji mold).